Reading from the N-terminus, the 422-residue chain is Mitogen-activated protein kinase spm1 (422 aa).

The Protein kinase domain occupies 21-314 (FKVVKELGQG…VDDALEHPYL (294 aa)). Residues 27 to 35 (LGQGAYGIV) and lysine 52 each bind ATP. Aspartate 149 acts as the Proton acceptor in catalysis. Threonine 186 bears the Phosphothreonine mark. The TXY signature appears at 186-188 (TEY). Phosphotyrosine is present on tyrosine 188. A disordered region spans residues 359 to 422 (RRRSHPTNPT…DHKSDDNRHN (64 aa)). Over residues 364-379 (PTNPTVNIPQPAQTVP) the composition is skewed to polar residues. A compositionally biased stretch (low complexity) spans 380–397 (SNDNGSFNVSSSSSSQTS). Residues 411-422 (AIDHKSDDNRHN) are compositionally biased toward basic and acidic residues.

It belongs to the protein kinase superfamily. CMGC Ser/Thr protein kinase family. MAP kinase subfamily. Requires Mg(2+) as cofactor. Dually phosphorylated on Thr-186 and Tyr-188, which activates the enzyme.

It catalyses the reaction L-seryl-[protein] + ATP = O-phospho-L-seryl-[protein] + ADP + H(+). The enzyme catalyses L-threonyl-[protein] + ATP = O-phospho-L-threonyl-[protein] + ADP + H(+). Activated by tyrosine and threonine phosphorylation by skh1/pek1. In terms of biological role, regulates cell integrity and functions coordinately with the protein kinase C pathway (pck1 and pck2). Involved the regulation of wall architecture, cell shape, cytokinesis in exponential and stationary phase, and metabolism of ions. The protein is Mitogen-activated protein kinase spm1 (spm1) of Schizosaccharomyces pombe (strain 972 / ATCC 24843) (Fission yeast).